The chain runs to 485 residues: MISSSKLKSVDFYRKIPRDLTEASLSGAGLSIVAALAMVFLFGMELSNYLAVNTSTSVIVDRSSDGEFLRIDFNLSFPALSCEFASVDVSDVLGTNRLNITKTVRKYSIDRNLVPTGSEFHPGPIPTVSKHGDDVEENHDDGSVPLSSRNFDSYSHQYPVLVVNFYAPWCYWSNRLKPSWEKTAKIMRERYDPEMDGRIILAKVDCTEEIDLCRRHHIQGYPSIRIFRKGSDLKENQGHHDHESYYGDRDTESLVAAMETYVANIPKDAHVLALEDKSNKTVDPAKRPAPLTSGCRIEGFVRVKKVPGSVVISARSGSHSFDPSQINVSHYVTQFSFGKRLSAKMFNELKRLTPYVGGHHDRLAGQSYIVKHGDVNANVTIEHYLQIVKTELVTLRSSKELKLVEEYEYTAHSSLVHSFYVPVVKFHFEPSPMQVLVTELPKSFSHFITNVCAIIGGVFTVAGILDSIFHNTLRLVKKVELGKNI.

In terms of domain architecture, Thioredoxin spans 114 to 263 (VPTGSEFHPG…LVAAMETYVA (150 aa)). Cys170 serves as the catalytic Nucleophile. Residues 444–464 (FSHFITNVCAIIGGVFTVAGI) traverse the membrane as a helical segment.

This sequence belongs to the protein disulfide isomerase family.

The protein resides in the membrane. Functionally, acts as a protein-folding catalyst that interacts with nascent polypeptides to catalyze the formation, isomerization, and reduction or oxidation of disulfide bonds. May play a role in storage protein biogenesis. The protein is Protein disulfide isomerase-like 5-4 (PDIL5-4) of Oryza sativa subsp. japonica (Rice).